A 344-amino-acid polypeptide reads, in one-letter code: Heat-inducible transcription repressor HrcA (344 aa).

It belongs to the HrcA family.

Its function is as follows. Negative regulator of class I heat shock genes (grpE-dnaK-dnaJ and groELS operons). Prevents heat-shock induction of these operons. The sequence is that of Heat-inducible transcription repressor HrcA from Streptococcus pyogenes serotype M1.